The sequence spans 1222 residues: ATP-dependent helicase/nuclease subunit A (1222 aa).

Positions 39–495 (QKRTAQQIEA…ILLKENFRSQ (457 aa)) constitute a UvrD-like helicase ATP-binding domain. 60–67 (ASAGSGKT) contacts ATP. A UvrD-like helicase C-terminal domain is found at 524 to 810 (QLIAGSHAQT…NLMTIHKSKG (287 aa)).

The protein belongs to the helicase family. AddA subfamily. Heterodimer of AddA and AddB/RexB. The cofactor is Mg(2+).

It carries out the reaction Couples ATP hydrolysis with the unwinding of duplex DNA by translocating in the 3'-5' direction.. The enzyme catalyses ATP + H2O = ADP + phosphate + H(+). Its function is as follows. The heterodimer acts as both an ATP-dependent DNA helicase and an ATP-dependent, dual-direction single-stranded exonuclease. Recognizes the chi site generating a DNA molecule suitable for the initiation of homologous recombination. The AddA nuclease domain is required for chi fragment generation; this subunit has the helicase and 3' -&gt; 5' nuclease activities. The chain is ATP-dependent helicase/nuclease subunit A from Streptococcus pyogenes serotype M6 (strain ATCC BAA-946 / MGAS10394).